We begin with the raw amino-acid sequence, 201 residues long: Anthranilate synthase component 2 (201 aa).

In terms of domain architecture, Glutamine amidotransferase type-1 spans 3-196 (NILFIDNFDS…IDWALSSTPA (194 aa)). 57 to 59 (GPG) serves as a coordination point for L-glutamine. Cys-84 serves as the catalytic Nucleophile; for GATase activity. L-glutamine is bound by residues Gln-88 and 134–135 (SL). Residues His-170 and Glu-172 each act as for GATase activity in the active site.

Heterotetramer consisting of two non-identical subunits: a beta subunit (TrpG) and a large alpha subunit (TrpE).

It carries out the reaction chorismate + L-glutamine = anthranilate + pyruvate + L-glutamate + H(+). It functions in the pathway amino-acid biosynthesis; L-tryptophan biosynthesis; L-tryptophan from chorismate: step 1/5. Part of a heterotetrameric complex that catalyzes the two-step biosynthesis of anthranilate, an intermediate in the biosynthesis of L-tryptophan. In the first step, the glutamine-binding beta subunit (TrpG) of anthranilate synthase (AS) provides the glutamine amidotransferase activity which generates ammonia as a substrate that, along with chorismate, is used in the second step, catalyzed by the large alpha subunit of AS (TrpE) to produce anthranilate. In the absence of TrpG, TrpE can synthesize anthranilate directly from chorismate and high concentrations of ammonia. The chain is Anthranilate synthase component 2 (trpG) from Vibrio cholerae serotype O1 (strain ATCC 39315 / El Tor Inaba N16961).